A 781-amino-acid chain; its full sequence is Probable serine/threonine-protein kinase C70.05c (781 aa).

2 disordered regions span residues 1–315 (MPSD…PLVS) and 368–417 (YSGK…TNIS). A compositionally biased stretch (low complexity) spans 21–31 (ESPSSRSIGSG). The segment covering 43 to 63 (FKNSFLSRKNSSQIKSPSDYK) has biased composition (polar residues). Residues 64–73 (SSAHEQRVNH) are compositionally biased toward basic and acidic residues. Residues 74-92 (TTDSMAHVPGNNSPLQTPQ) show a composition bias toward polar residues. At S94 the chain carries Phosphoserine. Residues 112–121 (SRHHKPHHSG) are compositionally biased toward basic residues. 3 stretches are compositionally biased toward polar residues: residues 136 to 146 (SNANSPTSESP), 161 to 195 (KNTS…PNSR), and 206 to 228 (NSAS…SLSR). S253 carries the phosphoserine modification. Residues 272 to 304 (PLTASPTPSSPTGTPNSMSKSPSLSSLASTGAS) show a composition bias toward low complexity. The span at 379–406 (NVGSSANTAPNSPTSANSSEGNQGNGPT) shows a compositional bias: polar residues. The region spanning 432-742 (AKRVVPRLSA…AQEALNLPFV (311 aa)) is the Protein kinase domain. Residues 452–460 (MGSGATAVI) and K480 contribute to the ATP site. D584 serves as the catalytic Proton acceptor.

This sequence belongs to the protein kinase superfamily. Ser/Thr protein kinase family.

It localises to the cytoplasm. It carries out the reaction L-seryl-[protein] + ATP = O-phospho-L-seryl-[protein] + ADP + H(+). The enzyme catalyses L-threonyl-[protein] + ATP = O-phospho-L-threonyl-[protein] + ADP + H(+). The polypeptide is Probable serine/threonine-protein kinase C70.05c (Schizosaccharomyces pombe (strain 972 / ATCC 24843) (Fission yeast)).